The chain runs to 88 residues: MIASSVKAEVIKDNARAANDTGSPEVQVALLTARINELTPHFKQHAKDHHGRRGLLRMVSRRRKLLDYLKAKDADRYTALIAKLGLRK.

This sequence belongs to the universal ribosomal protein uS15 family. In terms of assembly, part of the 30S ribosomal subunit. Forms a bridge to the 50S subunit in the 70S ribosome, contacting the 23S rRNA.

Functionally, one of the primary rRNA binding proteins, it binds directly to 16S rRNA where it helps nucleate assembly of the platform of the 30S subunit by binding and bridging several RNA helices of the 16S rRNA. Its function is as follows. Forms an intersubunit bridge (bridge B4) with the 23S rRNA of the 50S subunit in the ribosome. The sequence is that of Small ribosomal subunit protein uS15 from Paracidovorax citrulli (strain AAC00-1) (Acidovorax citrulli).